A 351-amino-acid chain; its full sequence is uncharacterized protein (351 aa).

Positions 1 to 27 are cleaved as a signal peptide; sequence MKNKKRVLIASSLSCAILLLSAATTQA. Residues 29–71 form a disordered region; it reads SAHKDSQDQNKKEHVDKSQQKDKRNVTNKDKNSTVPDDIGKNG. Over residues 30–60 the composition is skewed to basic and acidic residues; the sequence is AHKDSQDQNKKEHVDKSQQKDKRNVTNKDKN.

The protein belongs to the aerolysin family.

This is an uncharacterized protein from Staphylococcus aureus (strain Mu50 / ATCC 700699).